The following is a 319-amino-acid chain: Sphingomyelinase D (319 aa).

Residues Met-1 to Ala-23 form the signal peptide. The active site involves His-44. Positions 64, 66, and 109 each coordinate Mg(2+). An SMD-tail motif is present at residues Ala-312 to Trp-319.

It belongs to the sphingomyelinase D/phospholipase D family. Mg(2+) is required as a cofactor.

The protein localises to the secreted. It catalyses the reaction a sphingomyelin + H2O = an N-acylsphing-4-enine 1-phosphate + choline + H(+). Catalyzes the hydrolysis of sphingomyelin. Sphingomyelinases D are produced by some spider in their venoms, but also by arthropods such as ticks, or pathogenic bacteria and fungi. They might play a role in pathogenicity through different mechanisms, such as membrane destabilization and host cell penetration, but also pulmonary inflammation and cutaneous lesions. In Ajellomyces capsulatus (strain G186AR / H82 / ATCC MYA-2454 / RMSCC 2432) (Darling's disease fungus), this protein is Sphingomyelinase D.